The following is a 284-amino-acid chain: 2,3,4,5-tetrahydropyridine-2,6-dicarboxylate N-succinyltransferase (284 aa).

Residues R111 and D148 each coordinate substrate.

Belongs to the transferase hexapeptide repeat family. In terms of assembly, homotrimer.

Its subcellular location is the cytoplasm. It carries out the reaction (S)-2,3,4,5-tetrahydrodipicolinate + succinyl-CoA + H2O = (S)-2-succinylamino-6-oxoheptanedioate + CoA. The protein operates within amino-acid biosynthesis; L-lysine biosynthesis via DAP pathway; LL-2,6-diaminopimelate from (S)-tetrahydrodipicolinate (succinylase route): step 1/3. This chain is 2,3,4,5-tetrahydropyridine-2,6-dicarboxylate N-succinyltransferase, found in Agrobacterium fabrum (strain C58 / ATCC 33970) (Agrobacterium tumefaciens (strain C58)).